The following is a 313-amino-acid chain: ADP,ATP carrier protein (313 aa).

3 Solcar repeats span residues 11 to 104 (PPFV…FKKM), 116 to 208 (KWMA…IKPV), and 216 to 302 (NNFL…LQVL). The next 5 membrane-spanning stretches (helical) occupy residues 13 to 40 (FVAD…IKLL), 81 to 105 (TANV…KKMF), 114 to 134 (YWKW…TSLL), 184 to 205 (FGPS…YDSI), and 219 to 239 (LASF…SYPL). ADP-binding residues include Arg86 and Arg98. Arg243 contributes to the ADP binding site. The tract at residues 243-248 (RRRMMM) is important for transport activity. A Nucleotide carrier signature motif motif is present at residues 243–248 (RRRMMM). Residues 279 to 299 (AGANILRGVAGAGVLSIYDQL) form a helical membrane-spanning segment.

The protein belongs to the mitochondrial carrier (TC 2.A.29) family. Monomer.

It localises to the mitochondrion inner membrane. The enzyme catalyses ADP(in) + ATP(out) = ADP(out) + ATP(in). Its activity is regulated as follows. The matrix-open state (m-state) is inhibited by the membrane-permeable bongkrekic acid (BKA). The cytoplasmic-open state (c-state) is inhibited by the membrane-impermeable toxic inhibitor carboxyatractyloside (CATR). ADP:ATP antiporter that mediates import of ADP into the mitochondrial matrix for ATP synthesis, and export of ATP out to fuel the cell. Cycles between the cytoplasmic-open state (c-state) and the matrix-open state (m-state): operates by the alternating access mechanism with a single substrate-binding site intermittently exposed to either the cytosolic (c-state) or matrix (m-state) side of the inner mitochondrial membrane. In Neurospora crassa (strain ATCC 24698 / 74-OR23-1A / CBS 708.71 / DSM 1257 / FGSC 987), this protein is ADP,ATP carrier protein (aac).